A 443-amino-acid chain; its full sequence is 3-isopropylmalate dehydratase large subunit (443 aa).

C347, C407, and C410 together coordinate [4Fe-4S] cluster.

This sequence belongs to the aconitase/IPM isomerase family. LeuC type 1 subfamily. In terms of assembly, heterodimer of LeuC and LeuD. It depends on [4Fe-4S] cluster as a cofactor.

It carries out the reaction (2R,3S)-3-isopropylmalate = (2S)-2-isopropylmalate. Its pathway is amino-acid biosynthesis; L-leucine biosynthesis; L-leucine from 3-methyl-2-oxobutanoate: step 2/4. Its function is as follows. Catalyzes the isomerization between 2-isopropylmalate and 3-isopropylmalate, via the formation of 2-isopropylmaleate. The sequence is that of 3-isopropylmalate dehydratase large subunit from Buchnera aphidicola subsp. Uroleucon obscurum.